The following is a 140-amino-acid chain: 3-hydroxyacyl-[acyl-carrier-protein] dehydratase FabZ (140 aa).

Histidine 47 is an active-site residue.

The protein belongs to the thioester dehydratase family. FabZ subfamily.

It is found in the cytoplasm. The catalysed reaction is a (3R)-hydroxyacyl-[ACP] = a (2E)-enoyl-[ACP] + H2O. Its function is as follows. Involved in unsaturated fatty acids biosynthesis. Catalyzes the dehydration of short chain beta-hydroxyacyl-ACPs and long chain saturated and unsaturated beta-hydroxyacyl-ACPs. This is 3-hydroxyacyl-[acyl-carrier-protein] dehydratase FabZ from Streptococcus pneumoniae (strain CGSP14).